The following is a 236-amino-acid chain: Ubiquinone biosynthesis O-methyltransferase (236 aa).

S-adenosyl-L-methionine-binding residues include arginine 39, glycine 59, aspartate 80, and methionine 124.

It belongs to the methyltransferase superfamily. UbiG/COQ3 family.

It catalyses the reaction a 3-demethylubiquinol + S-adenosyl-L-methionine = a ubiquinol + S-adenosyl-L-homocysteine + H(+). The enzyme catalyses a 3-(all-trans-polyprenyl)benzene-1,2-diol + S-adenosyl-L-methionine = a 2-methoxy-6-(all-trans-polyprenyl)phenol + S-adenosyl-L-homocysteine + H(+). It participates in cofactor biosynthesis; ubiquinone biosynthesis. O-methyltransferase that catalyzes the 2 O-methylation steps in the ubiquinone biosynthetic pathway. This is Ubiquinone biosynthesis O-methyltransferase from Shewanella halifaxensis (strain HAW-EB4).